The primary structure comprises 272 residues: Ethanolamine ammonia-lyase small subunit (272 aa).

Positions 161, 182, and 211 each coordinate adenosylcob(III)alamin.

This sequence belongs to the EutC family. In terms of assembly, the basic unit is a heterodimer which dimerizes to form tetramers. The heterotetramers trimerize; 6 large subunits form a core ring with 6 small subunits projecting outwards. Adenosylcob(III)alamin is required as a cofactor.

Its subcellular location is the bacterial microcompartment. The catalysed reaction is ethanolamine = acetaldehyde + NH4(+). It functions in the pathway amine and polyamine degradation; ethanolamine degradation. Catalyzes the deamination of various vicinal amino-alcohols to oxo compounds. Allows this organism to utilize ethanolamine as the sole source of nitrogen and carbon in the presence of external vitamin B12. The polypeptide is Ethanolamine ammonia-lyase small subunit (Pseudomonas putida (strain ATCC 47054 / DSM 6125 / CFBP 8728 / NCIMB 11950 / KT2440)).